We begin with the raw amino-acid sequence, 597 residues long: MTDHTNADTLRTPIVAVLGHVDHGKTSLLDTIRGSAVSEGEAGAITQHIGATDIPLDTISEMAGELIDPTDFDLPGLLFIDTPGHHSFSTLRARGGALADIAVLVVDVNDGFQPQTEEAIDILRRTGTPFVVAANKVDTTPGWNPQDGQPIQRSLEAQSERAESMLNENLYEIIGQLSDAGFSADLYWRVQDFQKNIGVVPLSAITGEGVPDLLTVLMGLSQRFMKEEMAIDVQGPGEGTVLEVKDERGFGATIDTVVYDGVVRNGDQIVVGGQDEPIVTEIRALLQPRPLEEIRTEKKFEKVAEVGAAAGVKIAAPDLDRAMAGAPVRVVRDRPVEEVVEEVKAELAEIEVETAENGVVVKADTLGSLEAMANALREAEVPILRAEVGDIAPRDIAVAETANQDEHKAILGFNVDLLANAETELENADVKLFTDEVIYQLIEDYETYVEEKQRAQQETVLDKVVRPSRFRILPDHTFRQNDPAVVGVEVISGTVQNNRNVGYFEGNEFERVGQLSGIQKQGDDVDEARAGERVSIAIDGPTVGRDIEEGDTLWTEIPEKHAKILEQELKEEITADEREALAAYLETKRKRDPFWGK.

In terms of domain architecture, tr-type G spans 10 to 226 (LRTPIVAVLG…LMGLSQRFMK (217 aa)). Residues 19–26 (GHVDHGKT) are G1. 19 to 26 (GHVDHGKT) provides a ligand contact to GTP. Positions 44 to 48 (AITQH) are G2. The G3 stretch occupies residues 81–84 (DTPG). Residues 81–85 (DTPGH) and 135–138 (NKVD) contribute to the GTP site. A G4 region spans residues 135 to 138 (NKVD). A G5 region spans residues 203-205 (SAI).

It belongs to the TRAFAC class translation factor GTPase superfamily. Classic translation factor GTPase family. IF-2 subfamily.

In terms of biological role, function in general translation initiation by promoting the binding of the formylmethionine-tRNA to ribosomes. Seems to function along with eIF-2. This chain is Probable translation initiation factor IF-2, found in Halorubrum lacusprofundi (strain ATCC 49239 / DSM 5036 / JCM 8891 / ACAM 34).